The chain runs to 156 residues: 6,7-dimethyl-8-ribityllumazine synthase (156 aa).

5-amino-6-(D-ribitylamino)uracil contacts are provided by residues phenylalanine 23, 57 to 59 (AFE), and 81 to 83 (AVI). 86-87 (ST) contributes to the (2S)-2-hydroxy-3-oxobutyl phosphate binding site. Histidine 89 serves as the catalytic Proton donor. Phenylalanine 114 contacts 5-amino-6-(D-ribitylamino)uracil. Residue arginine 128 participates in (2S)-2-hydroxy-3-oxobutyl phosphate binding.

It belongs to the DMRL synthase family.

It carries out the reaction (2S)-2-hydroxy-3-oxobutyl phosphate + 5-amino-6-(D-ribitylamino)uracil = 6,7-dimethyl-8-(1-D-ribityl)lumazine + phosphate + 2 H2O + H(+). It participates in cofactor biosynthesis; riboflavin biosynthesis; riboflavin from 2-hydroxy-3-oxobutyl phosphate and 5-amino-6-(D-ribitylamino)uracil: step 1/2. Its function is as follows. Catalyzes the formation of 6,7-dimethyl-8-ribityllumazine by condensation of 5-amino-6-(D-ribitylamino)uracil with 3,4-dihydroxy-2-butanone 4-phosphate. This is the penultimate step in the biosynthesis of riboflavin. The protein is 6,7-dimethyl-8-ribityllumazine synthase of Sulfurospirillum multivorans (Dehalospirillum multivorans).